A 205-amino-acid polypeptide reads, in one-letter code: Adenylate kinase (205 aa).

Position 11–16 (11–16 (GSGKGT)) interacts with ATP. Positions 31–60 (STGDIFRHNVKSMTPLGVEAKRYIDNGDFV) are NMP. Residues threonine 32, arginine 37, 58–60 (DFV), 86–89 (GYPR), and glutamine 93 each bind AMP. Positions 127-137 (KRAEIEGRADD) are LID. Residue arginine 128 participates in ATP binding. Positions 134 and 145 each coordinate AMP. Glycine 173 contacts ATP.

It belongs to the adenylate kinase family. In terms of assembly, monomer.

It is found in the cytoplasm. It carries out the reaction AMP + ATP = 2 ADP. It participates in purine metabolism; AMP biosynthesis via salvage pathway; AMP from ADP: step 1/1. Its function is as follows. Catalyzes the reversible transfer of the terminal phosphate group between ATP and AMP. Plays an important role in cellular energy homeostasis and in adenine nucleotide metabolism. This is Adenylate kinase from Micrococcus luteus (strain ATCC 4698 / DSM 20030 / JCM 1464 / CCM 169 / CCUG 5858 / IAM 1056 / NBRC 3333 / NCIMB 9278 / NCTC 2665 / VKM Ac-2230) (Micrococcus lysodeikticus).